We begin with the raw amino-acid sequence, 114 residues long: UPF0145 protein YG5714_0873 (114 aa).

The protein belongs to the UPF0145 family.

This Saccharolobus islandicus (strain Y.G.57.14 / Yellowstone #1) (Sulfolobus islandicus) protein is UPF0145 protein YG5714_0873.